The sequence spans 285 residues: Phosphate import ATP-binding protein PstB (285 aa).

The ABC transporter domain occupies 39 to 280 (LEVSDLQLWY…PAKKQTEDYI (242 aa)). Position 71 to 78 (71 to 78 (GPSGCGKS)) interacts with ATP.

It belongs to the ABC transporter superfamily. Phosphate importer (TC 3.A.1.7) family. The complex is composed of two ATP-binding proteins (PstB), two transmembrane proteins (PstC and PstA) and a solute-binding protein (PstS).

It is found in the cell inner membrane. The enzyme catalyses phosphate(out) + ATP + H2O = ADP + 2 phosphate(in) + H(+). In terms of biological role, part of the ABC transporter complex PstSACB involved in phosphate import. Responsible for energy coupling to the transport system. The chain is Phosphate import ATP-binding protein PstB from Alkalilimnicola ehrlichii (strain ATCC BAA-1101 / DSM 17681 / MLHE-1).